The primary structure comprises 151 residues: Ubiquitin-like protein 4A-B (151 aa).

The Ubiquitin-like domain occupies 1-76 (MILTIKPLKG…LNLVVRPAGE (76 aa)).

As to quaternary structure, component of the BAT3 complex.

It is found in the cytoplasm. The protein localises to the cytosol. Functionally, component of the BAT3 complex, a multiprotein complex involved in the post-translational delivery of tail-anchored (TA) membrane proteins to the endoplasmic reticulum membrane. TA membrane proteins, also named type II transmembrane proteins, contain a single C-terminal transmembrane region. This chain is Ubiquitin-like protein 4A-B (ubl4ab), found in Oncorhynchus mykiss (Rainbow trout).